Here is a 133-residue protein sequence, read N- to C-terminus: Small ribosomal subunit protein uS8 (133 aa).

Belongs to the universal ribosomal protein uS8 family. Part of the 30S ribosomal subunit. Contacts proteins S5 and S12.

One of the primary rRNA binding proteins, it binds directly to 16S rRNA central domain where it helps coordinate assembly of the platform of the 30S subunit. This chain is Small ribosomal subunit protein uS8, found in Chlamydia felis (strain Fe/C-56) (Chlamydophila felis).